The chain runs to 373 residues: Zn(2)-C6 fungal-type transcription factor afumD (373 aa).

The segment at Met1–Thr48 is disordered. A compositionally biased stretch (basic residues) spans Arg33 to Thr48. Positions Cys50–Cys77 form a DNA-binding region, zn(2)-C6 fungal-type. The tract at residues Gly86–Ala110 is disordered.

Its subcellular location is the nucleus. Functionally, zn(2)-C6 fungal-type transcription factor; part of the gene cluster that mediates the biosynthesis fumihopaside A, a hopane-type glucoside that enhances the thermotolerance and UV resistance of N.fumigata. This is Zn(2)-C6 fungal-type transcription factor afumD from Aspergillus fumigatus (strain CBS 144.89 / FGSC A1163 / CEA10) (Neosartorya fumigata).